The chain runs to 498 residues: Glutamyl-tRNA(Gln) amidotransferase subunit A (498 aa).

Residues Lys-85 and Ser-160 each act as charge relay system in the active site. The Acyl-ester intermediate role is filled by Ser-184.

The protein belongs to the amidase family. GatA subfamily. In terms of assembly, heterotrimer of A, B and C subunits.

It carries out the reaction L-glutamyl-tRNA(Gln) + L-glutamine + ATP + H2O = L-glutaminyl-tRNA(Gln) + L-glutamate + ADP + phosphate + H(+). Its function is as follows. Allows the formation of correctly charged Gln-tRNA(Gln) through the transamidation of misacylated Glu-tRNA(Gln) in organisms which lack glutaminyl-tRNA synthetase. The reaction takes place in the presence of glutamine and ATP through an activated gamma-phospho-Glu-tRNA(Gln). This is Glutamyl-tRNA(Gln) amidotransferase subunit A from Mycolicibacterium vanbaalenii (strain DSM 7251 / JCM 13017 / BCRC 16820 / KCTC 9966 / NRRL B-24157 / PYR-1) (Mycobacterium vanbaalenii).